The primary structure comprises 294 residues: Elongation factor Ts, mitochondrial 2 (294 aa).

Belongs to the EF-Ts family.

Its subcellular location is the mitochondrion. In terms of biological role, associates with the EF-Tu.GDP complex and induces the exchange of GDP to GTP. It remains bound to the aminoacyl-tRNA.EF-Tu.GTP complex up to the GTP hydrolysis stage on the ribosome. This is Elongation factor Ts, mitochondrial 2 from Paramecium tetraurelia.